The following is an 89-amino-acid chain: Protein S100-A8 (89 aa).

EF-hand domains follow at residues 12–47 (LIDV…KFMK) and 46–81 (MKKK…VGLE). Residues histidine 17 and histidine 27 each coordinate Zn(2+). Aspartate 33 contributes to the Ca(2+) binding site. Cysteine 42 carries the S-nitrosocysteine modification. 4 residues coordinate Ca(2+): aspartate 59, asparagine 61, aspartate 63, and glutamate 70. Residue histidine 83 participates in Zn(2+) binding.

It belongs to the S-100 family. In terms of assembly, homodimer. Preferentially exists as a heterodimer or heterotetramer with S100A9 known as calprotectin (S100A8/A9). S100A8 interacts with AGER, ATP2A2 and with the heterodimeric complex formed by TLR4 and LY96. Calprotectin (S100A8/9) interacts with CEACAM3 and tubulin filaments in a calcium-dependent manner. Heterotetrameric calprotectin (S100A8/A9) interacts with ANXA6 and associates with tubulin filaments in activated monocytes. S100A8 and calprotectin (S100A8/9) interact with NCF2/P67PHOX, RAC1 and RAC2. Calprotectin (S100A8/9) interacts with CYBA and CYBB. Calprotectin (S100A8/9) interacts with NOS2 to form the iNOS-S100A8/A9 transnitrosylase complex. Calprotectin (S100A8/9) interacts with CD69. As to expression, found essentially in phagocytic cells.

It localises to the secreted. Its subcellular location is the cytoplasm. It is found in the cytoskeleton. The protein resides in the cell membrane. S100A8 is a calcium- and zinc-binding protein which plays a prominent role in the regulation of inflammatory processes and immune response. It can induce neutrophil chemotaxis and adhesion. Predominantly found as calprotectin (S100A8/A9) which has a wide plethora of intra- and extracellular functions. The intracellular functions include: facilitating leukocyte arachidonic acid trafficking and metabolism, modulation of the tubulin-dependent cytoskeleton during migration of phagocytes and activation of the neutrophilic NADPH-oxidase. Also participates in regulatory T-cell differentiation together with CD69. Activates NADPH-oxidase by facilitating the enzyme complex assembly at the cell membrane, transferring arachidonic acid, an essential cofactor, to the enzyme complex and S100A8 contributes to the enzyme assembly by directly binding to NCF2/P67PHOX. The extracellular functions involve pro-inflammatory, antimicrobial, oxidant-scavenging and apoptosis-inducing activities. Its pro-inflammatory activity includes recruitment of leukocytes, promotion of cytokine and chemokine production, and regulation of leukocyte adhesion and migration. Acts as an alarmin or a danger associated molecular pattern (DAMP) molecule and stimulates innate immune cells via binding to pattern recognition receptors such as Toll-like receptor 4 (TLR4) and receptor for advanced glycation endproducts (AGER). Binding to TLR4 and AGER activates the MAP-kinase and NF-kappa-B signaling pathways resulting in the amplification of the pro-inflammatory cascade. Has antimicrobial activity towards bacteria and fungi and exerts its antimicrobial activity probably via chelation of Zn(2+) which is essential for microbial growth. Can induce cell death via autophagy and apoptosis and this occurs through the cross-talk of mitochondria and lysosomes via reactive oxygen species (ROS) and the process involves BNIP3. Can regulate neutrophil number and apoptosis by an anti-apoptotic effect; regulates cell survival via ITGAM/ITGB and TLR4 and a signaling mechanism involving MEK-ERK. Its role as an oxidant scavenger has a protective role in preventing exaggerated tissue damage by scavenging oxidants. The iNOS-S100A8/A9 transnitrosylase complex is proposed to direct selective inflammatory stimulus-dependent S-nitrosylation of multiple targets such as GAPDH, ANXA5, EZR, MSN and VIM by recognizing a [IL]-x-C-x-x-[DE] motif; S100A8 seems to contribute to S-nitrosylation site selectivity. The chain is Protein S100-A8 (S100A8) from Bos taurus (Bovine).